The chain runs to 152 residues: Probable ribose-5-phosphate isomerase B (152 aa).

12–13 (DH) contributes to the D-ribulose 5-phosphate binding site. The Proton acceptor role is filled by cysteine 70. D-ribulose 5-phosphate is bound at residue 71-75 (GTGVG). Residue histidine 103 is the Proton donor of the active site. Residues aspartate 104, arginine 114, arginine 137, and arginine 141 each contribute to the D-ribulose 5-phosphate site.

This sequence belongs to the LacAB/RpiB family. In terms of assembly, homodimer.

It catalyses the reaction aldehydo-D-ribose 5-phosphate = D-ribulose 5-phosphate. The protein operates within carbohydrate degradation; pentose phosphate pathway; D-ribose 5-phosphate from D-ribulose 5-phosphate (non-oxidative stage): step 1/1. In terms of biological role, catalyzes the interconversion of ribulose-5-P and ribose-5-P. This Mycoplasma pneumoniae (strain ATCC 29342 / M129 / Subtype 1) (Mycoplasmoides pneumoniae) protein is Probable ribose-5-phosphate isomerase B.